A 613-amino-acid chain; its full sequence is GPI mannosyltransferase 3 (613 aa).

Residue Asn19 is glycosylated (N-linked (GlcNAc...) asparagine). 12 helical membrane passes run 22 to 42 (FFLRDIIVIRLINAWWIATFF), 83 to 103 (LFAGVYLVADFISSHILPVGI), 106 to 126 (ATILVAVPQALQAVIAGLGDW), 132 to 152 (AVSIYGANSNVSFFALFLQIF), 168 to 188 (LEMTLTVMAMYYWPWELLGVA), 216 to 236 (LAVVLRPTNILIWATIVLFTI), 252 to 272 (VVTLIREAIWCGSLILAISAA), 280 to 300 (FWTFPAYNFLYFNLSKSLAVF), 309 to 329 (YFLQGLPLICTTSLPFAVASL), 342 to 362 (FNVLKTLAYTVFTTVGALSLI), 369 to 389 (FIYPLLPALSILAAPYTASFF), and 411 to 431 (YLFVALGVNMFLAGYLSFFHQ).

The protein belongs to the glycosyltransferase 22 family. PIGB subfamily.

The protein resides in the endoplasmic reticulum membrane. It participates in glycolipid biosynthesis; glycosylphosphatidylinositol-anchor biosynthesis. Its function is as follows. Mannosyltransferase involved in glycosylphosphatidylinositol-anchor biosynthesis. Transfers the third mannose to Man2-GlcN-acyl-PI during GPI precursor assembly. The polypeptide is GPI mannosyltransferase 3 (GPI10) (Gibberella zeae (strain ATCC MYA-4620 / CBS 123657 / FGSC 9075 / NRRL 31084 / PH-1) (Wheat head blight fungus)).